The chain runs to 676 residues: RNA helicase NPH-II (676 aa).

The region spanning 172 to 347 is the Helicase ATP-binding domain; it reads FSAWISHRPV…VFLPNPAFIH (176 aa). 185–192 contacts ATP; the sequence is GGTGVGKT. The DEXH box motif lies at 296 to 299; it reads DEVH. One can recognise a Helicase C-terminal domain in the interval 366-535; sequence NPSSRMAYIE…NYILYANKFN (170 aa).

Belongs to the DEAD box helicase family. DEAH subfamily. In terms of assembly, monomer.

Its subcellular location is the virion. It catalyses the reaction ATP + H2O = ADP + phosphate + H(+). In terms of biological role, NTP-dependent helicase that catalyzes unidirectional unwinding of 3'tailed duplex RNAs and plays an important role during transcription of early mRNAs, presumably by preventing R-loop formation behind the elongating RNA polymerase. Might also play a role in the export of newly synthesized mRNA chains out of the core into the cytoplasm. Required for replication and propagation of viral particles. This Vaccinia virus (strain Copenhagen) (VACV) protein is RNA helicase NPH-II (OPG084).